The following is a 114-amino-acid chain: Large ribosomal subunit protein uL22 (114 aa).

This sequence belongs to the universal ribosomal protein uL22 family. Part of the 50S ribosomal subunit.

Functionally, this protein binds specifically to 23S rRNA; its binding is stimulated by other ribosomal proteins, e.g. L4, L17, and L20. It is important during the early stages of 50S assembly. It makes multiple contacts with different domains of the 23S rRNA in the assembled 50S subunit and ribosome. The globular domain of the protein is located near the polypeptide exit tunnel on the outside of the subunit, while an extended beta-hairpin is found that lines the wall of the exit tunnel in the center of the 70S ribosome. The protein is Large ribosomal subunit protein uL22 of Bacillus licheniformis (strain ATCC 14580 / DSM 13 / JCM 2505 / CCUG 7422 / NBRC 12200 / NCIMB 9375 / NCTC 10341 / NRRL NRS-1264 / Gibson 46).